We begin with the raw amino-acid sequence, 210 residues long: MASTVSPNRMTLLALKRRYTISKRGLKLLKDKLEAMVKAFRDLYTEFDRERRYIEELMEAFVELLNQYESETSPAVRDRIRSMQLFQVEYELSTRMVFNIKVPFLDVSLKRMDIPDLYLQTGPAFYKALSVYEELLPHLLKLASLRNALHMMSVEIEKTRRRSNALEYNVVPELERTIKWVQQYLDEMERSQTVRIMKVKSMLEKERGNA.

The protein belongs to the V-ATPase D subunit family.

Its function is as follows. Produces ATP from ADP in the presence of a proton gradient across the membrane. The sequence is that of V-type ATP synthase subunit D from Coprothermobacter proteolyticus (strain ATCC 35245 / DSM 5265 / OCM 4 / BT).